A 329-amino-acid chain; its full sequence is Phenylalanine--tRNA ligase alpha subunit (329 aa).

E254 contributes to the Mg(2+) binding site.

This sequence belongs to the class-II aminoacyl-tRNA synthetase family. Phe-tRNA synthetase alpha subunit type 1 subfamily. In terms of assembly, tetramer of two alpha and two beta subunits. Mg(2+) is required as a cofactor.

It localises to the cytoplasm. The catalysed reaction is tRNA(Phe) + L-phenylalanine + ATP = L-phenylalanyl-tRNA(Phe) + AMP + diphosphate + H(+). This is Phenylalanine--tRNA ligase alpha subunit from Actinobacillus succinogenes (strain ATCC 55618 / DSM 22257 / CCUG 43843 / 130Z).